Consider the following 350-residue polypeptide: Small ribosomal subunit protein uS3 (350 aa).

The KH type-2 domain maps to 38-106 (IRKMMSRGME…QVQLNILEVK (69 aa)). A disordered region spans residues 211–350 (AEREAQEALQ…TPGTPEKAEE (140 aa)). The segment covering 222–232 (QTRRDRPRRGP) has biased composition (basic residues). A compositionally biased stretch (low complexity) spans 261-350 (NAPAAETAAS…TPGTPEKAEE (90 aa)).

This sequence belongs to the universal ribosomal protein uS3 family. As to quaternary structure, part of the 30S ribosomal subunit. Forms a tight complex with proteins S10 and S14.

Functionally, binds the lower part of the 30S subunit head. Binds mRNA in the 70S ribosome, positioning it for translation. This chain is Small ribosomal subunit protein uS3, found in Frankia alni (strain DSM 45986 / CECT 9034 / ACN14a).